A 355-amino-acid chain; its full sequence is Protein RecA (355 aa).

67–74 (GPESSGKT) provides a ligand contact to ATP.

The protein belongs to the RecA family.

It is found in the cytoplasm. Its function is as follows. Can catalyze the hydrolysis of ATP in the presence of single-stranded DNA, the ATP-dependent uptake of single-stranded DNA by duplex DNA, and the ATP-dependent hybridization of homologous single-stranded DNAs. It interacts with LexA causing its activation and leading to its autocatalytic cleavage. The polypeptide is Protein RecA (Shewanella halifaxensis (strain HAW-EB4)).